A 178-amino-acid polypeptide reads, in one-letter code: Adenine phosphoribosyltransferase (178 aa).

It belongs to the purine/pyrimidine phosphoribosyltransferase family. In terms of assembly, homodimer.

It localises to the cytoplasm. It catalyses the reaction AMP + diphosphate = 5-phospho-alpha-D-ribose 1-diphosphate + adenine. The protein operates within purine metabolism; AMP biosynthesis via salvage pathway; AMP from adenine: step 1/1. Its function is as follows. Catalyzes a salvage reaction resulting in the formation of AMP, that is energically less costly than de novo synthesis. This chain is Adenine phosphoribosyltransferase, found in Mycoplasmoides gallisepticum (strain R(low / passage 15 / clone 2)) (Mycoplasma gallisepticum).